A 616-amino-acid chain; its full sequence is Formin-binding protein 1 (616 aa).

A required for self-association and induction of membrane tubulation region spans residues 1 to 79; the sequence is MSWGTELWDQ…CKAFLSTLNE (79 aa). In terms of domain architecture, F-BAR spans 1–264; the sequence is MSWGTELWDQ…AAESIDQKND (264 aa). The interaction with microtubules stretch occupies residues 1–334; that stretch reads MSWGTELWDQ…KKNKLMSLLT (334 aa). An N6-acetyllysine mark is found at K66 and K110. Residues 67–259 are a coiled coil; it reads YTACKAFLST…DGIVKAAESI (193 aa). The segment at 251–616 is required for self-association and induction of membrane tubulation; that stretch reads GIVKAAESID…VYLDKNAKGS (366 aa). 2 disordered regions span residues 280-314 and 332-366; these read GDIE…RFGG and LLTS…KEPL. Phosphoserine is present on residues S296 and S299. Over residues 337–346 the composition is skewed to pro residues; that stretch reads HQPPPPPPAS. Residues S348 and S358 each carry the phosphoserine modification. Residues 398–490 adopt a coiled-coil conformation; that stretch reads PEDFSNFPPE…VEGRLPARSE (93 aa). Residues 399 to 551 are interaction with RND2; the sequence is EDFSNFPPEQ…FDDEEPLPAI (153 aa). Positions 403 to 480 constitute an REM-1 domain; it reads NFPPEQRRKK…AQKFEAWLAE (78 aa). Residues 487–531 form a disordered region; sequence ARSEQARRQSGLYDGQTHQTVTNCAQDRESPDGSYTEEQSQESEH. The segment at 494 to 616 is interaction with PDE6G; that stretch reads RQSGLYDGQT…VYLDKNAKGS (123 aa). S496 carries the post-translational modification Phosphoserine. Position 499 is a phosphotyrosine (Y499). Residues 502 to 511 are compositionally biased toward polar residues; the sequence is QTHQTVTNCA. The tract at residues 513 to 616 is required for interaction with TNKS; that stretch reads DRESPDGSYT…VYLDKNAKGS (104 aa). S520 is subject to Phosphoserine. The segment at 534 to 616 is interaction with DNM1 and DNM3; sequence LAPDFDDEFD…VYLDKNAKGS (83 aa). The region spanning 549–610 is the SH3 domain; it reads PAIGTCKALY…PTSYVEVYLD (62 aa). An interaction with ARHGAP17, DAAM1, DIAPH1 and DIAPH2 region spans residues 549 to 616; sequence PAIGTCKALY…VYLDKNAKGS (68 aa). Positions 552–608 are interaction with DNM2 and WASL; sequence GTCKALYTFEGQNEGTISVVEGETLSVIEEDKGDGWTRIRRNEDEEGYVPTSYVEVY. Positions 552 to 609 are interaction with FASLG; the sequence is GTCKALYTFEGQNEGTISVVEGETLSVIEEDKGDGWTRIRRNEDEEGYVPTSYVEVYL.

This sequence belongs to the FNBP1 family. In terms of assembly, homodimerizes, the dimers can polymerize end-to-end to form filamentous structures. Interacts specifically with GTP-bound RND2 and CDC42. Interacts with AKAP9, ARHGAP17, DAAM1, DIAPH1, DIAPH2, DNM1, DNM2, DNM3, FASLG/FASL, microtubules, PDE6G, SNX2 and WASL/N-WASP. May interact with TNKS. As to expression, expressed in brain and testis.

It is found in the cytoplasm. It localises to the cytoskeleton. The protein resides in the cell cortex. The protein localises to the lysosome. Its subcellular location is the cytoplasmic vesicle. It is found in the cell membrane. It localises to the membrane. The protein resides in the clathrin-coated pit. Required to coordinate membrane tubulation with reorganization of the actin cytoskeleton during the late stage of clathrin-mediated endocytosis. Binds to lipids such as phosphatidylinositol 4,5-bisphosphate and phosphatidylserine and promotes membrane invagination and the formation of tubules. Also enhances actin polymerization via the recruitment of WASL/N-WASP, which in turn activates the Arp2/3 complex. Actin polymerization may promote the fission of membrane tubules to form endocytic vesicles. May act as a link between RND2 signaling and regulation of the actin cytoskeleton. May be required for the lysosomal retention of FASLG/FASL. This chain is Formin-binding protein 1 (Fnbp1), found in Mus musculus (Mouse).